Reading from the N-terminus, the 586-residue chain is Glutathione S-transferase C-terminal domain-containing protein homolog (586 aa).

In terms of domain architecture, GST C-terminal spans L121–L276.

It belongs to the GSTCD family.

This Drosophila pseudoobscura pseudoobscura (Fruit fly) protein is Glutathione S-transferase C-terminal domain-containing protein homolog.